We begin with the raw amino-acid sequence, 134 residues long: Retinol-binding protein 2 (134 aa).

Residues K41 and Q109 each coordinate all-trans-retinol.

It belongs to the calycin superfamily. Fatty-acid binding protein (FABP) family. In terms of tissue distribution, expressed in prenatal liver, intestine and lung, and in adult intestine.

Its subcellular location is the cytoplasm. Functionally, intracellular transport of retinol. The protein is Retinol-binding protein 2 (Rbp2) of Mus musculus (Mouse).